We begin with the raw amino-acid sequence, 525 residues long: Cytochrome P450 4V2 (525 aa).

The helical transmembrane segment at 13-33 (LLLWGAASAVSVAGATVLLNI) threads the bilayer. Heme-binding residues include glutamate 329 and cysteine 467.

This sequence belongs to the cytochrome P450 family. Heme serves as cofactor.

The protein localises to the endoplasmic reticulum membrane. The catalysed reaction is dodecanoate + reduced [NADPH--hemoprotein reductase] + O2 = 12-hydroxydodecanoate + oxidized [NADPH--hemoprotein reductase] + H2O + H(+). The enzyme catalyses tetradecanoate + reduced [NADPH--hemoprotein reductase] + O2 = 14-hydroxytetradecanoate + oxidized [NADPH--hemoprotein reductase] + H2O + H(+). It catalyses the reaction hexadecanoate + reduced [NADPH--hemoprotein reductase] + O2 = 16-hydroxyhexadecanoate + oxidized [NADPH--hemoprotein reductase] + H2O + H(+). It carries out the reaction (5Z,8Z,11Z,14Z,17Z)-eicosapentaenoate + reduced [NADPH--hemoprotein reductase] + O2 = 20-hydroxy-(5Z,8Z,11Z,14Z,17Z)-eicosapentaenoate + oxidized [NADPH--hemoprotein reductase] + H2O + H(+). The catalysed reaction is (4Z,7Z,10Z,13Z,16Z,19Z)-docosahexaenoate + reduced [NADPH--hemoprotein reductase] + O2 = 22-hydroxy-(4Z,7Z,10Z,13Z,16Z,19Z)-docosahexaenoate + oxidized [NADPH--hemoprotein reductase] + H2O + H(+). It functions in the pathway lipid metabolism; fatty acid metabolism. Its activity is regulated as follows. Inhibited by N-hydroxy-N'-(4-n-butyl-2-methylphenyl formamidine)(HET0016) with an IC(50) of 38 nM. Its function is as follows. A cytochrome P450 monooxygenase involved in fatty acid metabolism in the eye. Catalyzes the omega-hydroxylation of polyunsaturated fatty acids (PUFAs) docosahexaenoate (DHA) and its precursor eicosapentaenoate (EPA), and may contribute to the homeostasis of these retinal PUFAs. Omega hydroxylates saturated fatty acids such as laurate, myristate and palmitate, the catalytic efficiency decreasing in the following order: myristate &gt; laurate &gt; palmitate (C14&gt;C12&gt;C16). Mechanistically, uses molecular oxygen inserting one oxygen atom into a substrate, and reducing the second into a water molecule, with two electrons provided by NADPH via cytochrome P450 reductase (CPR; NADPH-ferrihemoprotein reductase). The sequence is that of Cytochrome P450 4V2 (Cyp4v2) from Rattus norvegicus (Rat).